Here is a 409-residue protein sequence, read N- to C-terminus: TNF receptor-associated factor 1 (409 aa).

A Phosphoserine modification is found at Ser139. The stretch at Glu167–Ala256 forms a coiled coil. Glycyl lysine isopeptide (Lys-Gly) (interchain with G-Cter in ubiquitin) cross-links involve residues Lys178 and Lys186. The 147-residue stretch at Asp259–Val405 folds into the MATH domain.

In terms of assembly, homotrimer. Heterotrimer with TRAF2. Interacts with TNFRSF1A/TNFR1, TNFRSF1B/TNFR2, TNFRSF4, TNFRSF5/CD40, TNFRSF8/CD30, TNFRSF9/CD137, TNFRSF11A/RANK, TNFRSF13C, TNFRSF18/AITR, TNFRSF17/BCMA, TNFRSF19/TROY, TNFRSF19L/RELT, XEDAR, EDAR, Epstein-Barr virus BNFL1/LMP-1, TANK/ITRAF, TRAIP and RIPK2. Interacts with BIRC2 and BIRC3 N-terminus; a single BIRC2 or BIRC3 molecule interacts with a heterotrimer formed by TRAF1 and TRAF2. Interacts with MAP3K14. Interacts with NFATC2IP, TRAFD1 and with HIVEP3. Interacts with GPS2. In terms of processing, polyubiquitinated by BIRC2 and/or BIRC3, leading to its subsequent proteasomal degradation. Ubiquitinated by the SCF(FBXL2) complex, leading to its degradation by the proteasome.

The protein resides in the cytoplasm. Its function is as follows. Adapter molecule that regulates the activation of NF-kappa-B and JNK. Plays a role in the regulation of cell survival and apoptosis. The heterotrimer formed by TRAF1 and TRAF2 is part of a E3 ubiquitin-protein ligase complex that promotes ubiquitination of target proteins, such as MAP3K14. The TRAF1/TRAF2 complex recruits the antiapoptotic E3 protein-ubiquitin ligases BIRC2 and BIRC3 to TNFRSF1B/TNFR2. The chain is TNF receptor-associated factor 1 (Traf1) from Mus musculus (Mouse).